Here is a 483-residue protein sequence, read N- to C-terminus: Regulatory protein ViaA (483 aa).

It belongs to the ViaA family. As to quaternary structure, homodimer. Interacts with RavA.

It is found in the cytoplasm. Component of the RavA-ViaA chaperone complex, which may act on the membrane to optimize the function of some of the respiratory chains. ViaA stimulates the ATPase activity of RavA. The sequence is that of Regulatory protein ViaA from Escherichia coli (strain 55989 / EAEC).